A 361-amino-acid chain; its full sequence is Peptide chain release factor 1 (361 aa).

At Gln237 the chain carries N5-methylglutamine. Positions 287–306 are disordered; it reads KRAAEEASTRKSLVGSGDRS.

The protein belongs to the prokaryotic/mitochondrial release factor family. Methylated by PrmC. Methylation increases the termination efficiency of RF1.

Its subcellular location is the cytoplasm. Peptide chain release factor 1 directs the termination of translation in response to the peptide chain termination codons UAG and UAA. The polypeptide is Peptide chain release factor 1 (Alteromonas mediterranea (strain DSM 17117 / CIP 110805 / LMG 28347 / Deep ecotype)).